A 3470-amino-acid polypeptide reads, in one-letter code: Dynein axonemal heavy chain 5 (3470 aa).

The stem stretch occupies residues 1–1938; that stretch reads MFRIGRRQLW…MIHITDVAFT (1938 aa). The interval 899-918 is disordered; sequence EKVRHENASPNGDTSGGGEG. 4 AAA regions span residues 1939-2161, 2221-2440, 2547-2800, and 2913-3167; these read YQNE…VLRT, TAIS…IQNL, VYPP…IWQG, and LYNE…FRRS. ATP contacts are provided by residues 1977-1984 and 2259-2266; these read GPAGTGKT and GPSGSGKT. 2 coiled-coil regions span residues 3207–3241 and 3434–3468; these read LKEA…VLKE and HALA…AMTE.

Belongs to the dynein heavy chain family. In terms of assembly, interacts with DNAL1. Consists of at least two heavy chains and a number of intermediate and light chains.

Its subcellular location is the cytoplasm. The protein localises to the cytoskeleton. It is found in the cilium axoneme. Functionally, force generating protein of respiratory cilia. Produces force towards the minus ends of microtubules. Dynein has ATPase activity; the force-producing power stroke is thought to occur on release of ADP. Required for structural and functional integrity of the cilia of ependymal cells lining the brain ventricles. The polypeptide is Dynein axonemal heavy chain 5 (Rattus norvegicus (Rat)).